The sequence spans 371 residues: 4-hydroxy-3-methylbut-2-en-1-yl diphosphate synthase (flavodoxin) (371 aa).

Cysteine 270, cysteine 273, cysteine 305, and glutamate 312 together coordinate [4Fe-4S] cluster.

This sequence belongs to the IspG family. The cofactor is [4Fe-4S] cluster.

The enzyme catalyses (2E)-4-hydroxy-3-methylbut-2-enyl diphosphate + oxidized [flavodoxin] + H2O + 2 H(+) = 2-C-methyl-D-erythritol 2,4-cyclic diphosphate + reduced [flavodoxin]. The protein operates within isoprenoid biosynthesis; isopentenyl diphosphate biosynthesis via DXP pathway; isopentenyl diphosphate from 1-deoxy-D-xylulose 5-phosphate: step 5/6. Its function is as follows. Converts 2C-methyl-D-erythritol 2,4-cyclodiphosphate (ME-2,4cPP) into 1-hydroxy-2-methyl-2-(E)-butenyl 4-diphosphate. The sequence is that of 4-hydroxy-3-methylbut-2-en-1-yl diphosphate synthase (flavodoxin) from Shewanella pealeana (strain ATCC 700345 / ANG-SQ1).